Here is a 2391-residue protein sequence, read N- to C-terminus: Filaggrin-2 (2391 aa).

Positions 1–81 (MTDLLRSVVT…TEFLLMIFKL (81 aa)) are S-100-like. 2 consecutive EF-hand domains span residues 8–43 (VVTV…ELHP) and 49–84 (DDPD…LTMA). Asp-62, Asp-64, Asp-66, Arg-68, and Glu-73 together coordinate Ca(2+). 3 disordered regions span residues 96-275 (ASGS…DSGR), 349-369 (SYSQ…CGGQ), and 406-2391 (NSSS…LSRH). Residues 98–107 (GSKKHRRGHR) are compositionally biased toward basic residues. A compositionally biased stretch (acidic residues) spans 111-121 (EESETEEDEED). Residues 149 to 163 (GTVKCRHGSNSRRLG) show a composition bias toward basic residues. Residues 166-176 (GNLSSSGNQEG) are compositionally biased toward polar residues. The segment covering 193–209 (GKDRHGSSSVELRERIN) has biased composition (basic and acidic residues). Residues 245 to 289 (ETSGHESNSTQSRIREQKLGSSCSGSGDSGRRSHACGYSNSSGCG) form a Filaggrin 1 repeat. Composition is skewed to polar residues over residues 420–442 (GSGS…SSGF) and 449–476 (SGQT…SGKT). The Filaggrin 2 repeat unit spans residues 421 to 466 (SGSSQSTSFEQHGTGLSQSSGFEQHVCGSGQTCGQHESTSSQSLGY). A compositionally biased stretch (gly residues) spans 480–507 (GQHGSGSGQSSGFGQCGSGSGQSSGFGQ). Over residues 508–562 (HGSVSGQSSGFGQHGSVSGQSSGFGQHESRSRQSSYGQHGSGSSQSSGYGQYGSR) the composition is skewed to low complexity. The span at 568 to 604 (GQHGLGSGQSTGFGQYGSGSGQSSGFGQHGSGSGQSS) shows a compositional bias: gly residues. Low complexity predominate over residues 605–655 (GFGQHESRSGQSSYGQHSSGSSQSSGYGQHGSRQTSGFGQHGSGSSQSTGF). Residues 656–666 (GQYGSGSGQSS) show a composition bias toward gly residues. Residues 667-734 (GFGQHVSGSG…SSGQSSSFGQ (68 aa)) show a composition bias toward low complexity. Positions 735–756 (HGSGSGQSSGFGQHGSGSGQSS) are enriched in gly residues. Over residues 757-807 (GFGQHESRSGQSSYGQHSSGSSQSSGYGQHGSRQTSGFGQHGSGSSQSTGF) the composition is skewed to low complexity. Positions 808–831 (GQYGSGSGQSAGFGQHGSGSGQSS) are enriched in gly residues. Residues 832-884 (GFGQHESRSHQSSYGQHGSGSSQSSGYGQHGSSSGQTSGFGQHRSSSGQYSGF) are compositionally biased toward low complexity. A compositionally biased stretch (gly residues) spans 885-908 (GQHGSGSGQSSGFGQHGTGSGQYS). The segment covering 918-956 (HQSSYGQHGSGSSQSSGYGQHGSSSGQTFGFGQHRSGSG) has biased composition (low complexity). Gly residues predominate over residues 957–972 (QSSGFGQHGSGSGQSS). Composition is skewed to low complexity over residues 973 to 982 (GFGQHESGSG) and 994 to 1027 (SSQS…GFGQ). A Filaggrin 3 repeat occupies 1019–1051 (SGQTTGFGQHRSSSGQYSGFGQHGSGSDQSSGF). A compositionally biased stretch (gly residues) spans 1052–1062 (GQHGTGSGQSS). Low complexity predominate over residues 1063 to 1098 (GFGQYESRSRQSSYGQHGSGSSQSSGYGQHGSNSGQ). The stretch at 1097–1141 (GQTSGFGQHRPGSGQSSGFGQYGSGSGQSSGFGQHGSGTGKSSGF) is one Filaggrin 4 repeat. The span at 1111–1137 (QSSGFGQYGSGSGQSSGFGQHGSGTGK) shows a compositional bias: gly residues. Residues 1148 to 1174 (SGQSSYGQHGTGSSQSSGCGQHESGSG) show a composition bias toward low complexity. Polar residues predominate over residues 1175–1198 (PTTSFGQHVSGSDNFSSSGQHISD). Positions 1206-1220 (GQYGSGSGQSTGLGQ) are enriched in gly residues. Polar residues predominate over residues 1226–1249 (VESGSTVHGRQETTHGQTINTTRH). Residues 1250 to 1263 (SQSGQGQSTQTGSR) are compositionally biased toward low complexity. Ser-1276 carries the phosphoserine modification. Residues 1329–1343 (HGQSTQTGSRTSGRQ) show a composition bias toward polar residues. Over residues 1346–1355 (SHSDATDSEV) the composition is skewed to basic and acidic residues. Polar residues predominate over residues 1366–1377 (QEQTHSQAGSQH). Basic and acidic residues predominate over residues 1378-1390 (GESESTVHERHET). Residues 1406 to 1416 (HGQSTQRGSRT) show a composition bias toward low complexity. Residues Ser-1427 and Ser-1428 each carry the phosphoserine modification. Polar residues predominate over residues 1439–1459 (RPQSQEQTHGQAGSQHGESGS). One copy of the Filaggrin 5 repeat lies at 1455–1510 (GESGSTVHGRHGTTHGQTGDTTRHAHYHHGKSTQRGSSTTGRRGSGHSESSDSEVH). The span at 1487–1496 (TQRGSSTTGR) shows a compositional bias: low complexity. Phosphoserine is present on residues Ser-1504 and Ser-1505. Positions 1510–1529 (HSGGSHTHSGHTHGQSGSQH) are enriched in low complexity. The span at 1544–1559 (HGQTGDTTRHSYSGHE) shows a compositional bias: polar residues. The segment covering 1560 to 1572 (QTTQTGSRTTGRQ) has biased composition (low complexity). Basic and acidic residues-rich tracts occupy residues 1575 to 1584 (SHSESTDSEV) and 1605 to 1618 (QHEE…ERHG). Ser-1579 bears the Phosphoserine mark. Residues 1607 to 1662 (EEPEFTVHERHGTTHGQIGDTTGHSHSGHGQSTQRGSRTTGRQRSSHSESSDSEVH) form a Filaggrin 6 repeat. Residues 1627–1649 (TTGHSHSGHGQSTQRGSRTTGRQ) are compositionally biased toward low complexity. Basic and acidic residues predominate over residues 1652-1661 (SHSESSDSEV). 2 positions are modified to phosphoserine: Ser-1656 and Ser-1657. Low complexity-rich tracts occupy residues 1662 to 1686 (HSGV…QSES) and 1711 to 1720 (GLTTQTGSRT). A compositionally biased stretch (basic and acidic residues) spans 1755 to 1768 (QHGESESIVHERHG). Residues 1757–1812 (GESESIVHERHGTIHGQTGDTTRHAHSGHGQSTQTGSRTTGRRSSGHSEYSDSEGH) form a Filaggrin 7 repeat. The segment covering 1784 to 1795 (GHGQSTQTGSRT) has biased composition (low complexity). Phosphoserine is present on residues Ser-1800 and Ser-1807. Residues 1834–1845 (GESESIVDERHG) are compositionally biased toward basic and acidic residues. Residues 1849–1873 (GQTGDTSGHSQSGHGQSTQSGSSTT) show a composition bias toward low complexity. Over residues 1879-1888 (GHSESSDSEV) the composition is skewed to basic and acidic residues. Phosphoserine occurs at positions 1883, 1884, and 1959. Filaggrin repeat units follow at residues 1928-1964 (DTTE…SEGP) and 1984-2039 (PESG…SEGH). Composition is skewed to low complexity over residues 1963-1982 (GPSG…AGSH) and 2013-2022 (GQSTQRGSRT). Ser-2034 carries the phosphoserine modification. Low complexity-rich tracts occupy residues 2039–2059 (HSGV…SQHG), 2114–2125 (HSGVSHTHSGHT), and 2162–2176 (HGQS…TGRQ). One copy of the Filaggrin 10 repeat lies at 2134 to 2189 (GESGSAIHGRQGTIHGQTGDTTRHGQSGHGQSTQTGSRTTGRQRSSHSESSDSEVH). Residues 2179-2190 (SHSESSDSEVHS) show a composition bias toward basic and acidic residues. Low complexity-rich tracts occupy residues 2201–2211 (HSQAGSRHGQS), 2219–2228 (QGTTHGQTGD), and 2238–2247 (GQSTQRGSRT). Residues 2273 to 2288 (GHIQGQAGSQQRQPGS) show a composition bias toward polar residues. Over residues 2320-2331 (SRSSRASHFQSH) the composition is skewed to low complexity. Positions 2367–2391 (SRKSISNSHLSWSTDSTANKQLSRH) are enriched in polar residues.

It belongs to the S100-fused protein family. In the N-terminal section; belongs to the S-100 family. Post-translationally, deiminated by PADI1, PADI2 or PADI3 in vitro. The deiminated form is degraded by calpain-1/CAPN1 more quickly and into shorter peptides than the intact protein. May be processed by calpain-1/CAPN1 in the uppermost epidermal layers. In terms of tissue distribution, expressed in skin, thymus, stomach and placenta, but not detected in heart, brain, liver, lung, bone marrow, small intestine, spleen, prostate, colon, adrenal gland, kidney, pancreas, mammary gland, bladder, thyroid, salivary gland and trachea. Weakly expressed in esophagus, tonsils and testis (at protein level). In the skin, strongly expressed in the upper stratum granulosum and lower stratum corneum, but not detected in the upper stratum corneum (at protein level). In scalp hair follicles, mainly restricted within the granular and cornified cells surrounding the infundibular outer root sheath, with weak expression in central and proximal outer root sheath (at protein level). Tends to be down-regulated in sporiatic lesions compared to non-lesional skin inthe same patients.

The protein localises to the cytoplasm. The protein resides in the cytoplasmic granule. In terms of biological role, essential for normal cell-cell adhesion in the cornified cell layers. Important for proper integrity and mechanical strength of the stratum corneum of the epidermis. The chain is Filaggrin-2 (FLG2) from Homo sapiens (Human).